The primary structure comprises 196 residues: Holliday junction branch migration complex subunit RuvA (196 aa).

A domain I region spans residues 1–63 (MYDYIKGTLV…DDAHLLFGFH (63 aa)). The interval 64-142 (TEDEKEVFLK…ELPAETTNTT (79 aa)) is domain II. The interval 143 to 146 (ANQT) is flexible linker. The domain III stretch occupies residues 147–196 (AGNQQLDEAMEALLALGYKATELKKVKAFFEDTNETAEQYIKSALKMLMK).

The protein belongs to the RuvA family. Homotetramer. Forms an RuvA(8)-RuvB(12)-Holliday junction (HJ) complex. HJ DNA is sandwiched between 2 RuvA tetramers; dsDNA enters through RuvA and exits via RuvB. An RuvB hexamer assembles on each DNA strand where it exits the tetramer. Each RuvB hexamer is contacted by two RuvA subunits (via domain III) on 2 adjacent RuvB subunits; this complex drives branch migration. In the full resolvosome a probable DNA-RuvA(4)-RuvB(12)-RuvC(2) complex forms which resolves the HJ.

The protein localises to the cytoplasm. In terms of biological role, the RuvA-RuvB-RuvC complex processes Holliday junction (HJ) DNA during genetic recombination and DNA repair, while the RuvA-RuvB complex plays an important role in the rescue of blocked DNA replication forks via replication fork reversal (RFR). RuvA specifically binds to HJ cruciform DNA, conferring on it an open structure. The RuvB hexamer acts as an ATP-dependent pump, pulling dsDNA into and through the RuvAB complex. HJ branch migration allows RuvC to scan DNA until it finds its consensus sequence, where it cleaves and resolves the cruciform DNA. This Streptococcus thermophilus (strain ATCC BAA-491 / LMD-9) protein is Holliday junction branch migration complex subunit RuvA.